The sequence spans 545 residues: Chaperonin GroEL (545 aa).

Residues 29–32 (TLGP), lysine 50, 86–90 (DGTTT), glycine 415, and aspartate 495 contribute to the ATP site.

It belongs to the chaperonin (HSP60) family. As to quaternary structure, forms a cylinder of 14 subunits composed of two heptameric rings stacked back-to-back. Interacts with the co-chaperonin GroES.

Its subcellular location is the cytoplasm. The enzyme catalyses ATP + H2O + a folded polypeptide = ADP + phosphate + an unfolded polypeptide.. In terms of biological role, together with its co-chaperonin GroES, plays an essential role in assisting protein folding. The GroEL-GroES system forms a nano-cage that allows encapsulation of the non-native substrate proteins and provides a physical environment optimized to promote and accelerate protein folding. This Phocaeicola vulgatus (strain ATCC 8482 / DSM 1447 / JCM 5826 / CCUG 4940 / NBRC 14291 / NCTC 11154) (Bacteroides vulgatus) protein is Chaperonin GroEL.